Here is an 88-residue protein sequence, read N- to C-terminus: MARVTVQDAVEKIGNRFDLILTAARRARQLQLNHREPLVPEDNDKPTVIALREIEKGLINNDIMDAQERQDALMQHQAEDAAVSLLTA.

Belongs to the RNA polymerase subunit omega family. In terms of assembly, the RNAP catalytic core consists of 2 alpha, 1 beta, 1 beta' and 1 omega subunit. When a sigma factor is associated with the core the holoenzyme is formed, which can initiate transcription.

It catalyses the reaction RNA(n) + a ribonucleoside 5'-triphosphate = RNA(n+1) + diphosphate. Functionally, promotes RNA polymerase assembly. Latches the N- and C-terminal regions of the beta' subunit thereby facilitating its interaction with the beta and alpha subunits. The chain is DNA-directed RNA polymerase subunit omega from Actinobacillus succinogenes (strain ATCC 55618 / DSM 22257 / CCUG 43843 / 130Z).